Consider the following 968-residue polypeptide: RNA polymerase-associated protein RapA (968 aa).

The region spanning 163–332 (EVGQRFAPRV…FARLRLLDPD (170 aa)) is the Helicase ATP-binding domain. An ATP-binding site is contributed by 176–183 (DEVGLGKT). The DEAH box motif lies at 278 to 281 (DEAH). The 188-residue stretch at 491–678 (RVDWLIDFLK…NTKSRYQELK (188 aa)) folds into the Helicase C-terminal domain.

This sequence belongs to the SNF2/RAD54 helicase family. RapA subfamily. Interacts with the RNAP. Has a higher affinity for the core RNAP than for the holoenzyme. Its ATPase activity is stimulated by binding to RNAP.

Its function is as follows. Transcription regulator that activates transcription by stimulating RNA polymerase (RNAP) recycling in case of stress conditions such as supercoiled DNA or high salt concentrations. Probably acts by releasing the RNAP, when it is trapped or immobilized on tightly supercoiled DNA. Does not activate transcription on linear DNA. Probably not involved in DNA repair. This chain is RNA polymerase-associated protein RapA, found in Shewanella piezotolerans (strain WP3 / JCM 13877).